Reading from the N-terminus, the 439-residue chain is Cysteine--tRNA ligase (439 aa).

C28 provides a ligand contact to Zn(2+). A 'HIGH' region motif is present at residues 30-40 (ITVYDLCHIGH). Residues C209, H234, and E238 each contribute to the Zn(2+) site. The short motif at 266-270 (KMSKS) is the 'KMSKS' region element. Position 269 (K269) interacts with ATP.

Belongs to the class-I aminoacyl-tRNA synthetase family. In terms of assembly, monomer. Requires Zn(2+) as cofactor.

The protein localises to the cytoplasm. The catalysed reaction is tRNA(Cys) + L-cysteine + ATP = L-cysteinyl-tRNA(Cys) + AMP + diphosphate. This Shigella boydii serotype 4 (strain Sb227) protein is Cysteine--tRNA ligase.